A 257-amino-acid polypeptide reads, in one-letter code: Glucose-1-phosphate cytidylyltransferase (257 aa).

Residues 6–10 (LAGGL), 11–13 (GTR), Lys23, Ser104, Arg109, and Gly128 contribute to the substrate site. Mg(2+) contacts are provided by Asp129 and Asp234.

This sequence belongs to the glucose-1-phosphate cytidylyltransferase family. Homohexamer. The cofactor is Mg(2+).

It catalyses the reaction alpha-D-glucose 1-phosphate + CTP + H(+) = CDP-D-glucose + diphosphate. The protein operates within nucleotide-sugar biosynthesis; CDP-3,6-dideoxy-D-mannose biosynthesis; CDP-3,6-dideoxy-D-mannose from CTP and alpha-D-glucose 1-phosphate: step 1/5. It participates in bacterial outer membrane biogenesis; LPS O-antigen biosynthesis. In terms of biological role, involved in the biosynthesis of the tyvelose, a 3,6-dideoxyhexose found in the O-antigen of the surface lipopolysaccharides. It catalyzes the transfer of a CMP moiety from CTP to glucose 1-phosphate. This enzyme can utilize either CTP or UTP as the nucleotide donor. The polypeptide is Glucose-1-phosphate cytidylyltransferase (rfbF) (Salmonella typhi).